The chain runs to 171 residues: Acetyltransferase PA2271 (171 aa).

One can recognise an N-acetyltransferase domain in the interval 3 to 162 (YRIRTSRDED…HEQEIGFAAD (160 aa)). CoA is bound by residues 84-86 (LSI) and 128-130 (PFY).

Its function is as follows. Catalyzes the transfer of an acetyl group from acetyl coenzyme A (AcCoA) to an acceptor substrate and releases both CoA and the acetylated product. It can use a variety of substrates including spermidine, spermine and N(8)-acetylspermidine, 7-aminocephalosporanic acid, colistin and thiamine. This Pseudomonas aeruginosa (strain ATCC 15692 / DSM 22644 / CIP 104116 / JCM 14847 / LMG 12228 / 1C / PRS 101 / PAO1) protein is Acetyltransferase PA2271.